The sequence spans 44 residues: Thymosin beta-4 (44 aa).

Residues 1 to 44 (MSDKPDMGEIQKFNKSKLKKTETQEKNPLPSKETIEQEKQAGES) form a disordered region. Residue Ser-2 is modified to N-acetylserine. Ser-2 carries the phosphoserine modification. An N6-acetyllysine modification is found at Lys-4. Residue Lys-12 is modified to N6-acetyllysine; alternate. Residue Lys-12 forms a Glycyl lysine isopeptide (Lys-Gly) (interchain with G-Cter in SUMO2); alternate linkage. Thr-23 carries the phosphothreonine modification. Lys-26 carries the N6-acetyllysine modification. Ser-31 is subject to Phosphoserine. An N6-acetyllysine modification is found at Lys-32. The segment covering 33 to 44 (ETIEQEKQAGES) has biased composition (basic and acidic residues). Thr-34 bears the Phosphothreonine mark. Lys-39 is subject to N6-acetyllysine.

This sequence belongs to the thymosin beta family. As to quaternary structure, identified in a complex composed of ACTA1, COBL, GSN AND TMSB4X. Interacts with SERPINB1. AcSDKP is inactivated by ACE, which removes the dipeptide Lys-Pro from its C-terminus.

The protein localises to the cytoplasm. It is found in the cytoskeleton. Plays an important role in the organization of the cytoskeleton. Binds to and sequesters actin monomers (G actin) and therefore inhibits actin polymerization. Its function is as follows. Potent inhibitor of bone marrow derived stem cell differentiation. Acts by inhibits the entry of hematopoietic pluripotent stem cells into the S-phase. The chain is Thymosin beta-4 (TMSB4) from Notamacropus eugenii (Tammar wallaby).